The sequence spans 412 residues: L-cysteine:1D-myo-inositol 2-amino-2-deoxy-alpha-D-glucopyranoside ligase (412 aa).

Residues 1–30 (MQTWSSPSVPKLRGAPRPLRLHDTATGEVR) form a disordered region. Cysteine 43 contacts Zn(2+). L-cysteinyl-5'-AMP is bound by residues 43–46 (CGIT), threonine 58, and 81–83 (NVT). Residues 45–55 (ITPYDATHLGH) carry the 'HIGH' region motif. The short motif at 187-192 (ERGGDP) is the 'ERGGDP' region element. Tryptophan 227 contacts L-cysteinyl-5'-AMP. Cysteine 231 provides a ligand contact to Zn(2+). 249–251 (GSD) is an L-cysteinyl-5'-AMP binding site. Histidine 256 provides a ligand contact to Zn(2+). Isoleucine 283 serves as a coordination point for L-cysteinyl-5'-AMP. Residues 289–293 (KMSKS) carry the 'KMSKS' region motif.

This sequence belongs to the class-I aminoacyl-tRNA synthetase family. MshC subfamily. Monomer. The cofactor is Zn(2+).

It carries out the reaction 1D-myo-inositol 2-amino-2-deoxy-alpha-D-glucopyranoside + L-cysteine + ATP = 1D-myo-inositol 2-(L-cysteinylamino)-2-deoxy-alpha-D-glucopyranoside + AMP + diphosphate + H(+). Functionally, catalyzes the ATP-dependent condensation of GlcN-Ins and L-cysteine to form L-Cys-GlcN-Ins. This is L-cysteine:1D-myo-inositol 2-amino-2-deoxy-alpha-D-glucopyranoside ligase from Actinosynnema mirum (strain ATCC 29888 / DSM 43827 / JCM 3225 / NBRC 14064 / NCIMB 13271 / NRRL B-12336 / IMRU 3971 / 101).